The following is a 270-amino-acid chain: NADPH-dependent 7-cyano-7-deazaguanine reductase (270 aa).

79 to 81 (IES) is a substrate binding site. Position 81–82 (81–82 (SK)) interacts with NADPH. The active-site Thioimide intermediate is C177. D184 functions as the Proton donor in the catalytic mechanism. 216 to 217 (HE) lines the substrate pocket. 245–246 (RG) serves as a coordination point for NADPH.

Belongs to the GTP cyclohydrolase I family. QueF type 2 subfamily. Homodimer.

The protein resides in the cytoplasm. It catalyses the reaction 7-aminomethyl-7-carbaguanine + 2 NADP(+) = 7-cyano-7-deazaguanine + 2 NADPH + 3 H(+). The protein operates within tRNA modification; tRNA-queuosine biosynthesis. Functionally, catalyzes the NADPH-dependent reduction of 7-cyano-7-deazaguanine (preQ0) to 7-aminomethyl-7-deazaguanine (preQ1). The polypeptide is NADPH-dependent 7-cyano-7-deazaguanine reductase (Acinetobacter baumannii (strain ACICU)).